The following is a 481-amino-acid chain: Trigger factor (481 aa).

Positions 174 to 261 (GDIAVVSFKG…LKDLKEKELP (88 aa)) constitute a PPIase FKBP-type domain. The interval 435 to 481 (VKEKTTKASQASKTTKAKKTTTKTTKATKTATKTTKATKTQNKKEKK) is disordered. Low complexity predominate over residues 456 to 474 (TKTTKATKTATKTTKATKT).

This sequence belongs to the FKBP-type PPIase family. Tig subfamily.

The protein localises to the cytoplasm. It catalyses the reaction [protein]-peptidylproline (omega=180) = [protein]-peptidylproline (omega=0). In terms of biological role, involved in protein export. Acts as a chaperone by maintaining the newly synthesized protein in an open conformation. Functions as a peptidyl-prolyl cis-trans isomerase. The chain is Trigger factor from Prochlorococcus marinus (strain MIT 9312).